The following is a 570-amino-acid chain: Ribosome-inactivating protein SNAI (570 aa).

The first 28 residues, 1–28 (MRLVAKLLYLAVLAICGLGIHGALTHPR), serve as a signal peptide directing secretion. Asparagine 40, asparagine 62, and asparagine 144 each carry an N-linked (GlcNAc...) asparagine glycan. Glutamate 199 is an active-site residue. A glycan (N-linked (GlcNAc...) asparagine) is linked at asparagine 260. 3 disulfide bridges follow: cysteine 284-cysteine 316, cysteine 332-cysteine 351, and cysteine 373-cysteine 385. Ricin B-type lectin domains are found at residues 319 to 439 (VEVT…WTVG) and 441 to 566 (VEPL…WITT). The stretch at 329 to 369 (DGLCVDVRYGHYIDGNPVQLRPCGNECNQLWTFRTDGTIRW) is one 1-alpha repeat. One copy of the 1-beta repeat lies at 370 to 405 (LGKCLTASSSVMIYDCNTVPPEATKWVVSIDGTITN). One copy of the 1-gamma repeat lies at 408–440 (SGLVLTAPQAAEGTALSLENNIHAARQGWTVGD). A 2-alpha repeat occupies 452-489 (KQMCLRENGENNFVWLEDCVLNRVQQEWALYGDGTIRV). A disulfide bridge connects residues cysteine 455 and cysteine 470. The N-linked (GlcNAc...) asparagine glycan is linked to asparagine 492. The 2-beta repeat unit spans residues 493–531 (RSLCVTSEDHEPSDLIVILKCEGSGNQRWVFNTNGTISN). A disulfide bond links cysteine 496 and cysteine 513. Asparagine 526 is a glycosylation site (N-linked (GlcNAc...) asparagine). A 2-gamma repeat occupies 534 to 567 (AKLLMDVAQRDVSLRKIILYRPTGNPNQQWITTT).

Belongs to the ribosome-inactivating protein family. Type 2 RIP subfamily. Tetramer of four pairs of disulfide bound A-B chains. Post-translationally, the precursor is processed in two chains, A and B, that are linked by a disulfide bond. A small truncated form corresponding roughly to the second ricin B-type lectin domain of the B chain, TrSNAI, can also be produced. In terms of processing, glycosylated. N-glycans of subunit A are (Man)2-3(Xyl)(GlcNAc)2(Fuc) at Asn-40, (GlcNAc)0-2(Man)3(Xyl)(GlcNAc)2(Fuc) or (Man)1-2(GlcNAc)2 at Asn-62, (Man)3(Xyl)(GlcNAc)2(Fuc)0-1 at Asn-144 and (GlcNAc)0-1(Man)3(Xyl)(GlcNAc)2(Fuc) at Asn-260. N-glycans of subunit B are (Man)3(Xyl)(GlcNAc)2(Fuc) at Asn-492 and (Man)6-9(GlcNAc)2 at Asn-526. Expressed in bark.

It carries out the reaction Endohydrolysis of the N-glycosidic bond at one specific adenosine on the 28S rRNA.. In terms of biological role, neu5Ac(alpha2-6)Gal/GalNAc specific agglutinin. Behaves as a type-2 ribosome-inactivating protein. Strongly inhibits mammalian but not plant ribosomes. The A chain is responsible for inhibiting protein synthesis through the catalytic inactivation of 60S ribosomal subunits by removing adenine from position 4,324 of 28S rRNA. The B chain binds to cell receptors and probably facilitates the entry into the cell of the A chain; B chains are also responsible for cell agglutination (lectin activity). Involved in plant defense against insects. Functionally, binds Neu5Ac(alpha2-6)Gal/GalNAc but has no clear agglutination activity. The chain is Ribosome-inactivating protein SNAI from Sambucus nigra (European elder).